Reading from the N-terminus, the 193-residue chain is dTTP/UTP pyrophosphatase (193 aa).

The active-site Proton acceptor is the Asp73.

Belongs to the Maf family. YhdE subfamily. The cofactor is a divalent metal cation.

The protein resides in the cytoplasm. The enzyme catalyses dTTP + H2O = dTMP + diphosphate + H(+). The catalysed reaction is UTP + H2O = UMP + diphosphate + H(+). In terms of biological role, nucleoside triphosphate pyrophosphatase that hydrolyzes dTTP and UTP. May have a dual role in cell division arrest and in preventing the incorporation of modified nucleotides into cellular nucleic acids. The sequence is that of dTTP/UTP pyrophosphatase from Caulobacter vibrioides (strain ATCC 19089 / CIP 103742 / CB 15) (Caulobacter crescentus).